Reading from the N-terminus, the 199-residue chain is LIM domain-containing protein WLIM2b (199 aa).

LIM zinc-binding domains follow at residues 8–68 (QKCK…LFKE) and 106–166 (EKCA…LFKE).

In terms of assembly, interacts with F-actin. Expressed in roots, leaves, stems, flowers and siliques. Barely detected in pollen.

It localises to the cytoplasm. The protein localises to the cytoskeleton. In terms of biological role, binds to actin filaments and promotes cross-linking into thick bundles. Has an actin-stabilizing activity. The actin regulatory activities are not regulated by pH and [Ca(2+)]. The polypeptide is LIM domain-containing protein WLIM2b (Arabidopsis thaliana (Mouse-ear cress)).